Reading from the N-terminus, the 722-residue chain is Dipeptidyl aminopeptidase BII (722 aa).

An N-terminal signal peptide occupies residues 1 to 24 (MRPNLLAAAIAVPLSLLAAQIAQA). Cystine bridges form between Cys-70/Cys-87 and Cys-166/Cys-174. His-86 functions as the Charge relay system in the catalytic mechanism. 215-216 (NW) is a binding site for substrate. Catalysis depends on Asp-224, which acts as the Charge relay system. Residues Asn-330, 655 to 657 (GNS), and 673 to 674 (FD) each bind substrate. Residue Ser-657 is the Charge relay system of the active site.

It belongs to the peptidase S46 family. As to quaternary structure, homodimer.

With respect to regulation, completely inhibited by the serine protease inhibitor diisopropyl fluorophosphate (DFP) and potently inhibited by 0.5 mM ZnCl(2), 10 mM o-phenanthlorine, phenylmethanesulfonyl fluoride (PMSF) and N-tosyl-L-phenyl-alanyl chloromethyl ketone (TPCK), but not by N-tosyl-L-lysyl chloromethyl ketone (TLCK). Activity is not affected significantly by protease inhibitors, such as chymostatin, leupeptin, N-ethylmaleimide (NEM), iodoacetate (IAA), L-trans-epoxysuccinyl-leucylamido(4-guanido)butane (E64) and pepstatin A or by CoCl(2), CaCl(2) and EDTA. Its function is as follows. Exopeptidase that catalyzes the removal of dipeptide units (NH2-P2-P1-) from the free amino termini of oligopeptides and small proteins. Peptide digestion is sequential and substrate recognition is non-specific, with the exception that Pro is not suitable as a P1 residue. Removes many residues of bioactive oligopeptides such as angiotensin I and neuromedin N and also cleaves oxidized insulin B chain. Able to hydrolyze an X-Pro bond, an imido bond. No endopeptidase activity. May play a physiological role in feeding. This Pseudoxanthomonas mexicana protein is Dipeptidyl aminopeptidase BII.